Here is a 362-residue protein sequence, read N- to C-terminus: L-arginine:L-lysine amidinotransferase (362 aa).

Residues Asp-195 and His-244 contribute to the active site. The Amidino-cysteine intermediate role is filled by Cys-346.

This sequence belongs to the amidinotransferase family.

It catalyses the reaction L-lysine + L-arginine = L-homoarginine + L-ornithine. It carries out the reaction L-canavanine + L-ornithine = L-canaline + L-arginine + H(+). Its function is as follows. Involved in the biosynthesis of phaseolotoxin, a nonhost-specific toxin which is a key component in the development of the halo blight disease of beans. Catalyzes the transfer of an amidino group from arginine to lysine to produce one molecule of homoarginine and one molecule of ornithine, both being precursors in the biosynthesis of phaseolotoxin. Can also use L-canavanine as an alternative amidine donor with L-ornithine as amidine acceptor. This Pseudomonas savastanoi pv. phaseolicola (Pseudomonas syringae pv. phaseolicola) protein is L-arginine:L-lysine amidinotransferase.